Consider the following 37-residue polypeptide: Cytochrome b6-f complex subunit 5 (37 aa).

Residues 5–25 form a helical membrane-spanning segment; that stretch reads LLSGIVLGLVPITITGLLVTA.

It belongs to the PetG family. The 4 large subunits of the cytochrome b6-f complex are cytochrome b6, subunit IV (17 kDa polypeptide, PetD), cytochrome f and the Rieske protein, while the 4 small subunits are PetG, PetL, PetM and PetN. The complex functions as a dimer.

The protein localises to the plastid. The protein resides in the chloroplast thylakoid membrane. Functionally, component of the cytochrome b6-f complex, which mediates electron transfer between photosystem II (PSII) and photosystem I (PSI), cyclic electron flow around PSI, and state transitions. PetG is required for either the stability or assembly of the cytochrome b6-f complex. This Tupiella akineta (Green alga) protein is Cytochrome b6-f complex subunit 5.